The following is a 297-amino-acid chain: ER membrane protein complex subunit 2 (297 aa).

Position 2 is an N-acetylalanine (Ala-2). TPR repeat units follow at residues 87–120, 155–188, and 192–225; these read HRVKRLTGMRFEAMERYDDAIQLYDRILQEDPTN, QEAWHELAELYINEHDYAKAAFCLEELMMTNPHN, and CQQYAEVKYTQGGLENLELSRKYFAQALKLNNRN. Lys-255 is modified (N6-acetyllysine).

It belongs to the EMC2 family. Component of the ER membrane protein complex (EMC). Interacts with WNK1 (via amphipathic alpha-helix region); promoting the ER membrane protein complex assembly by preventing EMC2 ubiquitination. In terms of processing, ubiquitinated when soluble in the cytoplasm, leading to its degradation by the proteasome. Interaction with EMC2 prevents its ubiquitination and degradation.

Its subcellular location is the endoplasmic reticulum membrane. Its function is as follows. Part of the endoplasmic reticulum membrane protein complex (EMC) that enables the energy-independent insertion into endoplasmic reticulum membranes of newly synthesized membrane proteins. Preferentially accommodates proteins with transmembrane domains that are weakly hydrophobic or contain destabilizing features such as charged and aromatic residues. Involved in the cotranslational insertion of multi-pass membrane proteins in which stop-transfer membrane-anchor sequences become ER membrane spanning helices. It is also required for the post-translational insertion of tail-anchored/TA proteins in endoplasmic reticulum membranes. By mediating the proper cotranslational insertion of N-terminal transmembrane domains in an N-exo topology, with translocated N-terminus in the lumen of the ER, controls the topology of multi-pass membrane proteins like the G protein-coupled receptors. By regulating the insertion of various proteins in membranes, it is indirectly involved in many cellular processes. The chain is ER membrane protein complex subunit 2 from Homo sapiens (Human).